The primary structure comprises 407 residues: Arginine deiminase (407 aa).

Residue C397 is the Amidino-cysteine intermediate of the active site.

Belongs to the arginine deiminase family.

Its subcellular location is the cytoplasm. It carries out the reaction L-arginine + H2O = L-citrulline + NH4(+). It functions in the pathway amino-acid degradation; L-arginine degradation via ADI pathway; carbamoyl phosphate from L-arginine: step 1/2. In Escherichia coli O6:H1 (strain CFT073 / ATCC 700928 / UPEC), this protein is Arginine deiminase (arcA).